Reading from the N-terminus, the 360-residue chain is MRLLENLWGKKPSRKSDKKKKGSSNYAYAVTRVRAMKSKLLPKESYPRLLNMGIDEITRFIQESEYKNDVDELAMKYSGGDLAEHALNRNLALTYDKLVRITSGELNYLIVAYLKRYDIWNIKTLLRGKIYNASVEDILESLIAAGEFTYTSMSELAAKATYQEIVEALKHTEYYPLLQKFDGTNLAYIENELDKIYYADLFEAIGKPRSKDRKLFAQVVRLEVDVKNLINLFRLKKAGVMQPDEIMPLMIEGGLELKIEKLAALPYDEFVNELQRTQYWEAISGVVGPDMISLTTLESRLTRYYLESSTILSHVSPITVVPILDYIIHKNNEATNLRIIFRGKETGLSDELIKDQLVII.

It belongs to the V-ATPase V0D/AC39 subunit family. Has multiple subunits, A(3), B(3), C, D, E, F, G, I and K(x); there may be a few other subunits as well.

Its subcellular location is the cell membrane. Component of the A-type ATP synthase that produces ATP from ADP in the presence of a proton gradient across the membrane. This chain is A-type ATP synthase subunit C, found in Methanosarcina mazei (strain ATCC BAA-159 / DSM 3647 / Goe1 / Go1 / JCM 11833 / OCM 88) (Methanosarcina frisia).